A 524-amino-acid chain; its full sequence is D-3-phosphoglycerate dehydrogenase (524 aa).

NAD(+) contacts are provided by residues 149–150 (RI), Asp169, 229–231 (CAR), and Asp255. Residue Arg231 is part of the active site. The active site involves Glu260. His278 acts as the Proton donor in catalysis. 278 to 281 (HQGA) is a binding site for NAD(+). Residues 452-524 (LAIIKHIDRP…NIKDVAVINL (73 aa)) enclose the ACT domain.

It belongs to the D-isomer specific 2-hydroxyacid dehydrogenase family.

The enzyme catalyses (2R)-3-phosphoglycerate + NAD(+) = 3-phosphooxypyruvate + NADH + H(+). Its pathway is amino-acid biosynthesis; L-serine biosynthesis; L-serine from 3-phospho-D-glycerate: step 1/3. In Methanocaldococcus jannaschii (strain ATCC 43067 / DSM 2661 / JAL-1 / JCM 10045 / NBRC 100440) (Methanococcus jannaschii), this protein is D-3-phosphoglycerate dehydrogenase (serA).